Consider the following 736-residue polypeptide: Subtilisin-like protease SBT4.11 (736 aa).

Positions 1–25 (MAKRGAFSSFHSFLIVLLFLNSVLA) are cleaved as a signal peptide. The propeptide at 26–113 (VTHGHQDKQV…VFPNKKLKLQ (88 aa)) is activation peptide. One can recognise an Inhibitor I9 domain in the interval 35 to 112 (VYIVYMGSLP…SVFPNKKLKL (78 aa)). Residues 117-579 (SWDFMGLKEG…AGHVDPIAAT (463 aa)) form the Peptidase S8 domain. Asp-145 serves as the catalytic Charge relay system. The N-linked (GlcNAc...) asparagine glycan is linked to Asn-176. His-200 (charge relay system) is an active-site residue. N-linked (GlcNAc...) asparagine glycans are attached at residues Asn-215 and Asn-223. In terms of domain architecture, PA spans 355-437 (KFPLVYGKSA…GLQKDDFESV (83 aa)). Ser-518 serves as the catalytic Charge relay system. Asn-555, Asn-602, Asn-638, Asn-646, and Asn-656 each carry an N-linked (GlcNAc...) asparagine glycan.

This sequence belongs to the peptidase S8 family. In terms of processing, the C-terminal propeptide is autocleaved.

Its subcellular location is the secreted. This chain is Subtilisin-like protease SBT4.11, found in Arabidopsis thaliana (Mouse-ear cress).